Here is a 130-residue protein sequence, read N- to C-terminus: Small ribosomal subunit protein uS11 (130 aa).

Belongs to the universal ribosomal protein uS11 family. Part of the 30S ribosomal subunit. Interacts with proteins S7 and S18. Binds to IF-3.

Located on the platform of the 30S subunit, it bridges several disparate RNA helices of the 16S rRNA. Forms part of the Shine-Dalgarno cleft in the 70S ribosome. The polypeptide is Small ribosomal subunit protein uS11 (Bdellovibrio bacteriovorus (strain ATCC 15356 / DSM 50701 / NCIMB 9529 / HD100)).